Consider the following 68-residue polypeptide: Conotoxin Pu5.5 (68 aa).

The signal sequence occupies residues 1-22 (MRCVPVFIILLVLIASAPSVDA). Residues 23–49 (RPQTKDDALASFRDSIKRHLQTLLDAR) constitute a propeptide that is removed on maturation.

The protein belongs to the conotoxin T superfamily. In terms of processing, contains 2 disulfide bonds that can be either 'C1-C3, C2-C4' or 'C1-C4, C2-C3', since these disulfide connectivities have been observed for conotoxins with cysteine framework V (for examples, see AC P0DQQ7 and AC P81755). In terms of tissue distribution, expressed by the venom duct.

Its subcellular location is the secreted. This Conus pulicarius (Flea-bitten cone) protein is Conotoxin Pu5.5.